The chain runs to 188 residues: Segregation and condensation protein B (188 aa).

The protein belongs to the ScpB family. As to quaternary structure, homodimer. Homodimerization may be required to stabilize the binding of ScpA to the Smc head domains. Component of a cohesin-like complex composed of ScpA, ScpB and the Smc homodimer, in which ScpA and ScpB bind to the head domain of Smc. The presence of the three proteins is required for the association of the complex with DNA.

The protein resides in the cytoplasm. Participates in chromosomal partition during cell division. May act via the formation of a condensin-like complex containing Smc and ScpA that pull DNA away from mid-cell into both cell halves. This chain is Segregation and condensation protein B, found in Lactococcus lactis subsp. cremoris (strain MG1363).